An 816-amino-acid chain; its full sequence is MGDTVVEPAPLKPTSEPTSGPPGNNGGSLLSVITEGVGELSVIDPEVAQKACQDVLEKVKLLHGGVAVSSRGAPLELVNGDGVDSEIRCLDDPPAQIREEEDEMGASVASGTAKGARRRRQNNSAKQSWLLRLFESKLFDISMAISYLYNSKEPGVQAYIGNRLFCFRNEDVDFYLPQLLNMYIHMDEDVGDAIKPYIVYRCRQSINFSLQCALLLGAYSSDMHISTQRHSRGTKLRKLILSDELKPAHRKRELPSLSPAPDTGLSPSKRTHQRSKSDATASISLSSNLKRTASNPKVENEDEELSSSTESIDNSFSSPVRLAPEREFIKSLMAIGKRLATLPTKEQKTQRLISELSLLNHKLPARVWLPTAGFDHHVVRVPHTQAVVLNSKDKAPYLIYVEVLECENFDTTSVPARIPENRIRSTRSVENLPECGITHEQRAGSFSTVPNYDNDDEAWSVDDIGELQVELPEVHTNSCDNISQFSVDSITSQESKEPVFIAAGDIRRRLSEQLAHTPTAFKRDPEDPSAVALKEPWQEKVRRIREGSPYGHLPNWRLLSVIVKCGDDLRQELLAFQVLKQLQSIWEQERVPLWIKPYKILVISADSGMIEPVVNAVSIHQVKKQSQLSLLDYFLQEHGSYTTEAFLSAQRNFVQSCAGYCLVCYLLQVKDRHNGNILLDAEGHIIHIDFGFILSSSPRNLGFETSAFKLTTEFVDVMGGLDGDMFNYYKMLMLQGLIAARKHMDKVVQIVEIMQQGSQLPCFHGSSTIRNLKERFHMSMTEEQLQLLVEQMVDGSMRSITTKLYDGFQYLTNGIM.

Disordered regions lie at residues 1 to 30 (MGDTVVEPAPLKPTSEPTSGPPGNNGGSLL), 99 to 120 (EEEDEMGASVASGTAKGARRRR), and 248 to 318 (AHRK…SFSS). Gly-2 carries the N-acetylglycine modification. Residues 2–68 (GDTVVEPAPL…VKLLHGGVAV (67 aa)) form an interaction with ACBD3 region. One can recognise a PIK helical domain in the interval 52–242 (CQDVLEKVKL…GTKLRKLILS (191 aa)). A Phosphoserine modification is found at Ser-258. Thr-263 carries the phosphothreonine modification. Ser-266, Ser-275, Ser-277, Ser-284, and Ser-294 each carry phosphoserine. Composition is skewed to polar residues over residues 278-297 (DATASISLSSNLKRTASNPK) and 306-318 (SSSTESIDNSFSS). A Phosphoserine modification is found at Ser-428. Thr-438 is modified (phosphothreonine). Ser-511 carries the phosphoserine modification. Residues Thr-517 and Thr-519 each carry the phosphothreonine modification. The region spanning 535 to 801 (EPWQEKVRRI…MVDGSMRSIT (267 aa)) is the PI3K/PI4K catalytic domain. A G-loop region spans residues 541 to 547 (VRRIREG). The interval 668 to 676 (QVKDRHNGN) is catalytic loop. Positions 687 to 711 (HIDFGFILSSSPRNLGFETSAFKLT) are activation loop.

It belongs to the PI3/PI4-kinase family. Type III PI4K subfamily. As to quaternary structure, interacts with ARF1 and ARF3 in the Golgi complex, but not with ARF4, ARF5 or ARF6. Interacts with NCS1/FREQ in a calcium-independent manner. Interacts with CALN1/CABP8 and CALN2/CABP7; in a calcium-dependent manner; this interaction competes with NCS1/FREQ binding. Interacts with ACBD3. Interacts with ARMH3, YWHAB, YWHAE, YWHAG, YWHAH, YWHAQ, YWHAZ and SFN. Interacts with GGA2 (via VHS domain); the interaction is important for PI4KB location at the Golgi apparatus membrane. Interacts with ATG9A. Requires Mg(2+) as cofactor. Mn(2+) is required as a cofactor.

The protein resides in the endomembrane system. It is found in the mitochondrion outer membrane. The protein localises to the rough endoplasmic reticulum membrane. Its subcellular location is the golgi apparatus. It localises to the golgi apparatus membrane. It carries out the reaction a 1,2-diacyl-sn-glycero-3-phospho-(1D-myo-inositol) + ATP = a 1,2-diacyl-sn-glycero-3-phospho-(1D-myo-inositol 4-phosphate) + ADP + H(+). Its activity is regulated as follows. Inhibited by wortmannin. Increased kinase activity upon interaction with NCS1/FREQ. Phosphorylates phosphatidylinositol (PI) in the first committed step in the production of the second messenger inositol-1,4,5,-trisphosphate (PIP). May regulate Golgi disintegration/reorganization during mitosis, possibly via its phosphorylation. Involved in Golgi-to-plasma membrane trafficking. The sequence is that of Phosphatidylinositol 4-kinase beta (PI4KB) from Callithrix jacchus (White-tufted-ear marmoset).